Here is a 324-residue protein sequence, read N- to C-terminus: Tetrahydromethanopterin:alpha-L-glutamate ligase (324 aa).

The 209-residue stretch at 113–321 folds into the ATP-grasp domain; sequence SYLLARAGLP…PAEYILEYLQ (209 aa). Residues Lys-148, 195–204, and Arg-220 contribute to the ATP site; that span reads QEFIENPGRD. A Mg(2+)-binding site is contributed by Asp-265. Residue Asp-265 coordinates Mn(2+). The segment at 274–293 is disordered; that stretch reads TGNENKKTEDKSTGQGSRIL. Residues Glu-294 and Asn-296 each contribute to the Mg(2+) site. Mn(2+) is bound by residues Glu-294 and Asn-296.

It belongs to the RimK family. MptN subfamily. In terms of assembly, homodimer. Requires Mg(2+) as cofactor. It depends on Mn(2+) as a cofactor.

The enzyme catalyses 5,6,7,8-tetrahydromethanopterin + L-glutamate + ATP = 5,6,7,8-tetrahydrosarcinapterin + ADP + phosphate + H(+). It participates in cofactor biosynthesis; 5,6,7,8-tetrahydrosarcinapterin biosynthesis. Functionally, catalyzes the ATP or GTP-dependent addition of one L-glutamate molecule to tetrahydromethanopterin, producing tetrahydrosarcinapterin. This Methanosarcina acetivorans (strain ATCC 35395 / DSM 2834 / JCM 12185 / C2A) protein is Tetrahydromethanopterin:alpha-L-glutamate ligase (mptN).